The following is a 359-amino-acid chain: MTLESIMACCLSEEAKEARRINDEIERQLRRDKRDARRELKLLLLGTGESGKSTFIKQMRIIHGSGYSDEDKRGFTKLVYQNIFTAMQAMIRAMDTLKIPYKYEHNKAHAQLVREVDVEKVSAFENPYVDAIKSLWNDPGIQECYDRRREYQLSDSTKYYLNDLDRVADPAYLPTQQDVLRVRVPTTGIIEYPFDLQSVIFRMVDVGGQRSERRKWIHCFENVTSIMFLVALSEYDQVLVESDNENRMEESKALFRTIITYPWFQNSSVILFLNKKDLLEEKIMYSHLVDYFPEYDGPQRDAQAAREFILKMFVDLNPDSDKIIYSHFTCATDTENIRFVFAAVKDTILQLNLKEYNLV.

Residues Cys9 and Cys10 are each lipidated (S-palmitoyl cysteine). Residues 38 to 359 (RELKLLLLGT…QLNLKEYNLV (322 aa)) form the G-alpha domain. The segment at 41–54 (KLLLLGTGESGKST) is G1 motif. The GTP site is built by Ser50, Gly51, Lys52, Ser53, Thr54, Ser156, Leu180, Arg181, and Arg183. Ser53 is a binding site for Mg(2+). The segment at 178–186 (DVLRVRVPT) is G2 motif. Thr186 serves as a coordination point for Mg(2+). A G3 motif region spans residues 201 to 210 (FRMVDVGGQR). Gln209 is subject to 5-glutamyl histamine. Residues 270–277 (ILFLNKKD) form a G4 motif region. Residues Asn274, Lys275, Asp277, and Ala331 each contribute to the GTP site. Residues 329–334 (TCATDT) form a G5 motif region.

The protein belongs to the G-alpha family. G(q) subfamily. In terms of assembly, g proteins are composed of 3 units; alpha, beta and gamma. The alpha chain contains the guanine nucleotide binding site. Interacts (GDP-bound form) with RIC8A (via C-terminus); promoting GNAQ folding and association with the plasma membrane. Binds NHERF1. Forms a complex with PECAM1 and BDKRB2. Interacts with GAS2L2. In terms of processing, palmitoylated by ZDHHC3 and ZDHHC7. Palmitoylation occurs in the Golgi and participates in the localization of GNAQ to the plasma membrane. Post-translationally, histaminylated at Gln-209 residues by TGM2.

The protein localises to the cell membrane. It localises to the golgi apparatus. Its subcellular location is the nucleus. The protein resides in the nucleus membrane. The enzyme catalyses GTP + H2O = GDP + phosphate + H(+). In terms of biological role, guanine nucleotide-binding proteins (G proteins) function as transducers downstream of G protein-coupled receptors (GPCRs) in numerous signaling cascades. The alpha chain contains the guanine nucleotide binding site and alternates between an active, GTP-bound state and an inactive, GDP-bound state. Signaling by an activated GPCR promotes GDP release and GTP binding. The alpha subunit has a low GTPase activity that converts bound GTP to GDP, thereby terminating the signal. Both GDP release and GTP hydrolysis are modulated by numerous regulatory proteins. Signaling is mediated via phospholipase C-beta-dependent inositol lipid hydrolysis for signal propagation: activates phospholipase C-beta: following GPCR activation, GNAQ activates PLC-beta (PLCB1, PLCB2, PLCB3 or PLCB4), leading to production of diacylglycerol (DAG) and inositol 1,4,5-trisphosphate (IP3). Required for platelet activation. Regulates B-cell selection and survival and is required to prevent B-cell-dependent autoimmunity. Regulates chemotaxis of BM-derived neutrophils and dendritic cells (in vitro). Transduces FFAR4 signaling in response to long-chain fatty acids (LCFAs). Together with GNA11, required for heart development. The sequence is that of Guanine nucleotide-binding protein G(q) subunit alpha (GNAQ) from Canis lupus familiaris (Dog).